We begin with the raw amino-acid sequence, 258 residues long: Acetylglutamate kinase (258 aa).

Substrate is bound by residues 44 to 45, Arg-66, and Asn-158; that span reads GG. ATP contacts are provided by residues 181-186 and 209-211; these read DVSGIL and IIT.

Belongs to the acetylglutamate kinase family. ArgB subfamily. Homodimer.

It is found in the cytoplasm. The enzyme catalyses N-acetyl-L-glutamate + ATP = N-acetyl-L-glutamyl 5-phosphate + ADP. The protein operates within amino-acid biosynthesis; L-arginine biosynthesis; N(2)-acetyl-L-ornithine from L-glutamate: step 2/4. Functionally, catalyzes the ATP-dependent phosphorylation of N-acetyl-L-glutamate. In Yersinia pestis bv. Antiqua (strain Antiqua), this protein is Acetylglutamate kinase.